The primary structure comprises 139 residues: Large ribosomal subunit protein bL21 (139 aa).

Belongs to the bacterial ribosomal protein bL21 family. As to quaternary structure, part of the 50S ribosomal subunit. Contacts protein L20.

Its function is as follows. This protein binds to 23S rRNA in the presence of protein L20. The chain is Large ribosomal subunit protein bL21 from Prochlorococcus marinus (strain NATL1A).